A 551-amino-acid polypeptide reads, in one-letter code: Nicotianamine aminotransferase B (551 aa).

The segment at 24–127 (KSNGHGVAAA…GHAAAAAEEE (104 aa)) is disordered. Over residues 86–96 (GHRESNGHAEA) the composition is skewed to basic and acidic residues. Positions 111 to 123 (AANGESNGHAAAA) are enriched in low complexity. Residue Lys379 is modified to N6-(pyridoxal phosphate)lysine.

It belongs to the class-I pyridoxal-phosphate-dependent aminotransferase family. Pyridoxal 5'-phosphate is required as a cofactor. Expressed in roots, but not in leaves.

The enzyme catalyses nicotianamine + 2-oxoglutarate = 3''-deamino-3''-oxonicotianamine + L-glutamate. Its function is as follows. Involved in biosynthesis of mugineic acid family phytosiderophores. The chain is Nicotianamine aminotransferase B from Hordeum vulgare (Barley).